An 815-amino-acid chain; its full sequence is MKFWLQQLGLAVLCASSAAARTAEHAYEFKSVAITGGGYITGIVGHPAEKNLLYARTDIGSTYRWEQELNKWIPLTDFLGPEDENLLGTESVAMDPTDPNRLYLAQGRYLSSNNSAFFVSNDRGATFTRYRAPFPMGANELGRNNGERLAVNPFKPNELWMGTRNAGLMKSSDRAKTWTNVTNFPDAAANGIGITFVIFDPQHEGTIYVGACIPGGLYYTTDGGKNWESIPGQPMQWDPSLLVYPNETQPQSAGPQPMKAVLASNGALYVTYADYPGPWGVAYGAVHVYNTTASIWTDITPNANNTSPKPYTPQAFPAGGYCGLSVAPDDPDTVVVVSLDRDPGPALDSMYLSRDGGKTWKDVSQLSTPPGSGGYWGHPIAEAALSNGTTVPWLSFNWGPQWGGYGAPSPVKGLTKFGWWMTAVLIDPSNPDHVLYGTGATIWATDTIAQADKNLAPKWYIQAQGIEETVTLAMISPREGAHLLSGAGDINGFRHDDLDTPQPMFGLPVFSNLNTLDWAGQRPEVIVRGGPCGHQYPDGCGQAAYSTDGGSEWTKFQTCIKGVNTSVHNPGVMTIDASGKYVVWTSAMYVVSPSVQAVTPPANDSGPYASSDWGKTWTSPRGLTVQTPYISADRVQPKTFYAFSGGVWYVSTDGGLSYDAFNATKLGLPAHTGAVPVVSVDRAGEIWLALGSNGVYHTTDFGKRWKRITHKGTVADLITVGAAAPGSTKPALFIRGSPGHPKKSDYGIYRSDDNGSTWDRVDDDDHRYGGFNLIQGDPRVYGRVYLGTGGRGLLYADIVPGQSDKEGNVPGTGGI.

A signal peptide spans 1–19 (MKFWLQQLGLAVLCASSAA). D58 (nucleophile) is an active-site residue. An N-linked (GlcNAc...) asparagine glycan is attached at N113. The BNR 1 repeat unit spans residues 118–128 (FVSNDRGATFT). A glycan (N-linked (GlcNAc...) asparagine) is linked at N180. One copy of the BNR 2 repeat lies at 218 to 228 (YYTTDGGKNWE). N-linked (GlcNAc...) asparagine glycosylation is found at N246, N290, and N304. Residues 351-361 (YLSRDGGKTWK) form a BNR 3 repeat. N-linked (GlcNAc...) asparagine glycosylation is present at N387. D489 serves as the catalytic Proton donor. The BNR 4 repeat unit spans residues 545 to 555 (YSTDGGSEWTK). 2 N-linked (GlcNAc...) asparagine glycosylation sites follow: N564 and N603. Residues 649-658 (YVSTDGGLSY) form a BNR 5 repeat. The N-linked (GlcNAc...) asparagine glycan is linked to N662. 2 BNR repeats span residues 696 to 706 (YHTTDFGKRWK) and 749 to 759 (YRSDDNGSTWD). N-linked (GlcNAc...) asparagine glycosylation is present at N754.

Belongs to the glycosyl hydrolase 74 family.

It is found in the secreted. The enzyme catalyses Hydrolysis of cellobiose from the reducing end of xyloglucans consisting of a beta-(1-&gt;4)-linked glucan carrying alpha-D-xylosyl groups on O-6 of the glucose residues. To be a substrate, the first residue must be unsubstituted, the second residue may bear a xylosyl group, whether further glycosylated or not, and the third residue, which becomes the new terminus by the action of the enzyme, is preferably xylosylated, but this xylose residue must not be further substituted.. Oligoxyloglucan-reducing end-specific xyloglucanase involved in degradation of xyloglucans. Releases the first two glycosyl segments from oligoxyloglucans. Active against cotton xyloglucan, tamarind xyloglucan and tamarind xyloglucan oligomers. This is Probable oligoxyloglucan-reducing end-specific xyloglucanase (xgcA) from Neosartorya fischeri (strain ATCC 1020 / DSM 3700 / CBS 544.65 / FGSC A1164 / JCM 1740 / NRRL 181 / WB 181) (Aspergillus fischerianus).